We begin with the raw amino-acid sequence, 198 residues long: (S)-2-hydroxypropylphosphonic acid epoxidase (198 aa).

The HTH cro/C1-type domain maps to 15-70 (LKDRREQVKMDHAALASLLGETPETVAAWENGEGGELTLTQLGRIAHVLGTSIGAL). Lys23 is a binding site for substrate. A DNA-binding region (H-T-H motif) is located at residues 26 to 45 (HAALASLLGETPETVAAWEN). Substrate-binding positions include Arg97, Tyr105, 135-138 (NSGH), and Glu142. The 61-residue stretch at 136–196 (SGHAGNEFLF…GTGSAKLIAV (61 aa)) folds into the Cupin type-2 domain. Residues His138, Glu142, and His180 each contribute to the Fe cation site.

It belongs to the non-heme iron-dependent dioxygenase family. Homotetramer. Fe(2+) is required as a cofactor.

It carries out the reaction (S)-2-hydroxypropylphosphonate + H2O2 = (1R,2S)-epoxypropylphosphonate + 2 H2O. It functions in the pathway antibiotic biosynthesis; fosfomycin biosynthesis. In terms of biological role, non-heme-dependent dioxygenase that catalyzes the oxidative epoxidation of (S)-2-hydroxypropylphosphonate into (1R,2S)-epoxypropylphosphonate, the final step in the biosynthesis of fosfomycin antibiotic. This chain is (S)-2-hydroxypropylphosphonic acid epoxidase (hppE), found in Streptomyces wedmorensis.